The primary structure comprises 96 residues: Protein C4 (96 aa).

A lipid anchor (N-myristoyl glycine; by host) is attached at glycine 2. Positions 66–96 are disordered; sequence STDDLQGEDSRQPMTLTPRQLTQDVSRRLLM. Residues 77–89 show a composition bias toward polar residues; that stretch reads QPMTLTPRQLTQD.

The protein belongs to the geminiviridae protein AC4/C4 family.

The protein resides in the host cell membrane. In terms of biological role, pathogenicity determinant. May act as a suppressor of RNA-mediated gene silencing, also known as post-transcriptional gene silencing (PTGS), a mechanism of plant viral defense that limits the accumulation of viral RNAs. The chain is Protein C4 from Solanum lycopersicum (Tomato).